The primary structure comprises 359 residues: Chorismate synthase (359 aa).

The NADP(+) site is built by R48 and R54. Residues 129-131 (RSS), 241-242 (NA), G285, 300-304 (KPTSS), and R326 contribute to the FMN site.

Belongs to the chorismate synthase family. In terms of assembly, homotetramer. It depends on FMNH2 as a cofactor.

It catalyses the reaction 5-O-(1-carboxyvinyl)-3-phosphoshikimate = chorismate + phosphate. It functions in the pathway metabolic intermediate biosynthesis; chorismate biosynthesis; chorismate from D-erythrose 4-phosphate and phosphoenolpyruvate: step 7/7. Catalyzes the anti-1,4-elimination of the C-3 phosphate and the C-6 proR hydrogen from 5-enolpyruvylshikimate-3-phosphate (EPSP) to yield chorismate, which is the branch point compound that serves as the starting substrate for the three terminal pathways of aromatic amino acid biosynthesis. This reaction introduces a second double bond into the aromatic ring system. This is Chorismate synthase from Afipia carboxidovorans (strain ATCC 49405 / DSM 1227 / KCTC 32145 / OM5) (Oligotropha carboxidovorans).